The following is a 212-amino-acid chain: 3-isopropylmalate dehydratase small subunit (212 aa).

The protein belongs to the LeuD family. LeuD type 1 subfamily. In terms of assembly, heterodimer of LeuC and LeuD.

It catalyses the reaction (2R,3S)-3-isopropylmalate = (2S)-2-isopropylmalate. It participates in amino-acid biosynthesis; L-leucine biosynthesis; L-leucine from 3-methyl-2-oxobutanoate: step 2/4. Catalyzes the isomerization between 2-isopropylmalate and 3-isopropylmalate, via the formation of 2-isopropylmaleate. This Laribacter hongkongensis (strain HLHK9) protein is 3-isopropylmalate dehydratase small subunit.